The following is a 268-amino-acid chain: 3-deoxy-manno-octulosonate cytidylyltransferase (268 aa).

It belongs to the KdsB family.

It is found in the cytoplasm. It carries out the reaction 3-deoxy-alpha-D-manno-oct-2-ulosonate + CTP = CMP-3-deoxy-beta-D-manno-octulosonate + diphosphate. The protein operates within nucleotide-sugar biosynthesis; CMP-3-deoxy-D-manno-octulosonate biosynthesis; CMP-3-deoxy-D-manno-octulosonate from 3-deoxy-D-manno-octulosonate and CTP: step 1/1. Its pathway is bacterial outer membrane biogenesis; lipopolysaccharide biosynthesis. Activates KDO (a required 8-carbon sugar) for incorporation into bacterial lipopolysaccharide in Gram-negative bacteria. The polypeptide is 3-deoxy-manno-octulosonate cytidylyltransferase (Ralstonia nicotianae (strain ATCC BAA-1114 / GMI1000) (Ralstonia solanacearum)).